Reading from the N-terminus, the 164-residue chain is MASPHQEPKPGDLIEIFRLGYEHWALYIGDGYVIHLAPPSEYPGAGSSSVFSVLSNSAEVKRERLEDVVGGCCYRVNNSLDHEYQPRPVEVIISSAKEMVGQKMKYSIVSRNCEHFVTQLRYGKSRCKQVEKAKVEVGVATALGILVVAGCSFAIRRYQKKATA.

The segment at 1 to 40 (MASPHQEPKPGDLIEIFRLGYEHWALYIGDGYVIHLAPPS) is essential for its ability regulate keratinocyte differentiation. The Cytoplasmic segment spans residues 1–134 (MASPHQEPKP…SRCKQVEKAK (134 aa)). The region spanning 13–129 (LIEIFRLGYE…LRYGKSRCKQ (117 aa)) is the LRAT domain. Catalysis depends on residues His23 and His35. The Acyl-thioester intermediate role is filled by Cys113. An interaction with TGM1 region spans residues 124–164 (KSRCKQVEKAKVEVGVATALGILVVAGCSFAIRRYQKKATA). The chain crosses the membrane as a helical span at residues 135–155 (VEVGVATALGILVVAGCSFAI). Topologically, residues 156-164 (RRYQKKATA) are lumenal.

It belongs to the H-rev107 family. Interacts with TGM1. As to expression, widely expressed.

The protein localises to the membrane. It catalyses the reaction a 1,2-diacyl-sn-glycero-3-phosphocholine + H2O = a 1-acyl-sn-glycero-3-phosphocholine + a fatty acid + H(+). It carries out the reaction a 1,2-diacyl-sn-glycero-3-phosphocholine + H2O = a 2-acyl-sn-glycero-3-phosphocholine + a fatty acid + H(+). The enzyme catalyses 1,2-dihexadecanoyl-sn-glycero-3-phosphocholine + H2O = 1-hexadecanoyl-sn-glycero-3-phosphocholine + hexadecanoate + H(+). The catalysed reaction is 1,2-dihexadecanoyl-sn-glycero-3-phosphocholine + H2O = 2-hexadecanoyl-sn-glycero-3-phosphocholine + hexadecanoate + H(+). It catalyses the reaction 1-hexadecanoyl-2-(9Z-octadecenoyl)-sn-glycero-3-phosphocholine + H2O = 2-(9Z-octadecenoyl)-sn-glycero-3-phosphocholine + hexadecanoate + H(+). It carries out the reaction 1-hexadecanoyl-2-(9Z-octadecenoyl)-sn-glycero-3-phosphocholine + H2O = 1-hexadecanoyl-sn-glycero-3-phosphocholine + (9Z)-octadecenoate + H(+). The enzyme catalyses 1-hexadecanoyl-2-(5Z,8Z,11Z,14Z-eicosatetraenoyl)-sn-glycero-3-phosphocholine + H2O = 2-(5Z,8Z,11Z,14Z)-eicosatetraenoyl-sn-glycero-3-phosphocholine + hexadecanoate + H(+). The catalysed reaction is 1-hexadecanoyl-2-(9Z,12Z-octadecadienoyl)-sn-glycero-3-phosphoethanolamine + H2O = 1-hexadecanoyl-sn-glycero-3-phosphoethanolamine + (9Z,12Z)-octadecadienoate + H(+). It catalyses the reaction 1-hexadecanoyl-2-(9Z,12Z-octadecadienoyl)-sn-glycero-3-phosphoethanolamine + H2O = 2-(9Z,12Z)-octadecadienoyl-sn-glycero-3-phosphoethanolamine + hexadecanoate + H(+). It carries out the reaction 1-hexadecanoyl-2-(5Z,8Z,11Z,14Z-eicosatetraenoyl)-sn-glycero-3-phosphoethanolamine + H2O = 2-(5Z,8Z,11Z,14Z)-eicosatetraenoyl-sn-glycero-3-phosphoethanolamine + hexadecanoate + H(+). The enzyme catalyses 1-hexanoyl-2-acyl-sn-glycero-3-phosphocholine + H2O = hexanoate + a 2-acyl-sn-glycero-3-phosphocholine + H(+). The catalysed reaction is 1,2-diheptadecanoyl-sn-glycero-3-phosphoethanolamine + 1-(9Z-octadecenoyl)-2-hexadecanoyl-sn-glycero-3-phosphocholine = 1,2-diheptadecanoyl-sn-glycero-3-phospho-N-hexadecanoyl-ethanolamine + 1-(9Z-octadecenoyl)-sn-glycero-3-phosphocholine + H(+). It catalyses the reaction 1,2-diheptadecanoyl-sn-glycero-3-phosphoethanolamine + 1-(9Z-octadecenoyl)-2-hexadecanoyl-sn-glycero-3-phosphocholine = 1,2-diheptadecanoyl-sn-glycero-3-phospho-N-(9Z-octadecenoyl)-ethanolamine + 2-hexadecanoyl-sn-glycero-3-phosphocholine + H(+). In terms of biological role, exhibits both phospholipase A1/2 and acyltransferase activities. Shows phospholipase A1 (PLA1) and A2 (PLA2), catalyzing the calcium-independent release of fatty acids from the sn-1 or sn-2 position of glycerophospholipids. For most substrates, PLA1 activity is much higher than PLA2 activity. Shows O-acyltransferase activity, catalyzing the transfer of a fatty acyl group from glycerophospholipid to the hydroxyl group of lysophospholipid. Shows N-acyltransferase activity, catalyzing the calcium-independent transfer of a fatty acyl group at the sn-1 position of phosphatidylcholine (PC) and other glycerophospholipids to the primary amine of phosphatidylethanolamine (PE), forming N-acylphosphatidylethanolamine (NAPE), which serves as precursor for N-acylethanolamines (NAEs). Promotes keratinocyte differentiation via activation of TGM1. This chain is Phospholipase A and acyltransferase 4, found in Homo sapiens (Human).